An 88-amino-acid chain; its full sequence is MPANRYRSRSYKRVYKNTPGGENVLRYKKKKPSKHVCAECGKLLHGVPRGRPYEINKLAKSHKRPNRPYGGYLCSSCARKHFKNEARK.

It belongs to the eukaryotic ribosomal protein eL34 family.

This Methanobrevibacter smithii (strain ATCC 35061 / DSM 861 / OCM 144 / PS) protein is Large ribosomal subunit protein eL34.